The following is a 145-amino-acid chain: Alpha-amylase/trypsin inhibitor CM2 (145 aa).

The N-terminal stretch at 1 to 25 is a signal peptide; that stretch reads MASKSSITHLLLAAVLVSVFAAAAA.

The protein belongs to the protease inhibitor I6 (cereal trypsin/alpha-amylase inhibitor) family. As to expression, developing endosperm.

It is found in the secreted. Its function is as follows. Alpha-amylase/trypsin inhibitor. It could be involved in insect defense mechanisms. In Triticum aestivum (Wheat), this protein is Alpha-amylase/trypsin inhibitor CM2.